The following is a 326-amino-acid chain: MRDRLKDPVKIFEINKGKRPVHIAAPMVRYSKLPFRQLVRDYNTDIVYTPMILAKEFLHPKGRYFDFSTNDADASLILQFGVDDPVILEKAAQLVGPYVDGIGINCGCPQTWAIQEGIGSALLDEPEKVHKLVRAVKSTLGESFCTEVKIRIAKDLNKTRHLMQVIEKSGADIITVHGRTRQDRSSFPVNLDAIREVRPCVQIPVVANGDVKSLRKGLEIAKYTETQGIMSARGLLENPALFAGYEETPWGCVERFLWYSTSYSLNFHLFYHHLTTMMGQMTTKRERMTIPKDSFASVMDWLDEHFVVRRPDEPMFGESVLPCRRY.

FMN contacts are provided by residues 26-28 (PMV) and Q79. C108 acts as the Proton donor in catalysis. FMN-binding positions include K149, H177, 208–210 (NGD), and 232–233 (AR).

The protein belongs to the Dus family. Dus4 subfamily. Requires FMN as cofactor.

The protein localises to the mitochondrion. The catalysed reaction is 5,6-dihydrouridine(20a) in tRNA + NADP(+) = uridine(20a) in tRNA + NADPH + H(+). It carries out the reaction 5,6-dihydrouridine(20a) in tRNA + NAD(+) = uridine(20a) in tRNA + NADH + H(+). The enzyme catalyses 5,6-dihydrouridine(20b) in tRNA + NAD(+) = uridine(20b) in tRNA + NADH + H(+). It catalyses the reaction 5,6-dihydrouridine(20b) in tRNA + NADP(+) = uridine(20b) in tRNA + NADPH + H(+). The catalysed reaction is a 5,6-dihydrouridine in mRNA + NAD(+) = a uridine in mRNA + NADH + H(+). It carries out the reaction a 5,6-dihydrouridine in mRNA + NADP(+) = a uridine in mRNA + NADPH + H(+). Catalyzes the synthesis of dihydrouridine, a modified base found in the D-loop of most tRNAs. Also able to mediate dihydrouridylation of some mRNAs, thereby affecting their translation. This chain is tRNA-dihydrouridine(20a/20b) synthase [NAD(P)+], found in Schizosaccharomyces pombe (strain 972 / ATCC 24843) (Fission yeast).